The chain runs to 443 residues: Glucose-6-phosphate isomerase (443 aa).

Catalysis depends on Glu285, which acts as the Proton donor. Residues His306 and Lys420 contribute to the active site.

This sequence belongs to the GPI family.

Its subcellular location is the cytoplasm. It carries out the reaction alpha-D-glucose 6-phosphate = beta-D-fructose 6-phosphate. Its pathway is carbohydrate biosynthesis; gluconeogenesis. The protein operates within carbohydrate degradation; glycolysis; D-glyceraldehyde 3-phosphate and glycerone phosphate from D-glucose: step 2/4. Its function is as follows. Catalyzes the reversible isomerization of glucose-6-phosphate to fructose-6-phosphate. This chain is Glucose-6-phosphate isomerase, found in Staphylococcus haemolyticus (strain JCSC1435).